Consider the following 409-residue polypeptide: ATPase ASNA1 homolog (409 aa).

21–28 (KGGVGKTT) contributes to the ATP binding site. Residue aspartate 62 is part of the active site. ATP-binding residues include glutamate 303 and asparagine 330. Zn(2+)-binding residues include cysteine 342 and cysteine 345.

Belongs to the arsA ATPase family. As to quaternary structure, homodimer.

The protein resides in the cytoplasm. It localises to the endoplasmic reticulum. In terms of biological role, ATPase required for the post-translational delivery of tail-anchored (TA) proteins to the endoplasmic reticulum. Recognizes and selectively binds the transmembrane domain of TA proteins in the cytosol. This complex then targets to the endoplasmic reticulum by membrane-bound receptors, where the tail-anchored protein is released for insertion. This process is regulated by ATP binding and hydrolysis. ATP binding drives the homodimer towards the closed dimer state, facilitating recognition of newly synthesized TA membrane proteins. ATP hydrolysis is required for insertion. Subsequently, the homodimer reverts towards the open dimer state, lowering its affinity for the membrane-bound receptor, and returning it to the cytosol to initiate a new round of targeting. This chain is ATPase ASNA1 homolog, found in Leishmania infantum.